Consider the following 197-residue polypeptide: Adenylylsulfatase HINT3 (197 aa).

The interval 14–43 (NPPGPNPTRDPTLRVSDCSSGSSGDGKVES) is disordered. The HIT domain occupies 51-158 (VFCKIIRGES…IPRKERDCLW (108 aa)). The Histidine triad motif signature appears at 143–147 (HTHIH). Histidine 145 functions as the Tele-AMP-histidine intermediate in the catalytic mechanism. Histidine 147 lines the substrate pocket.

It localises to the peroxisome. The catalysed reaction is adenosine 5'-phosphosulfate + H2O = sulfate + AMP + 2 H(+). In terms of biological role, possesses adenylylsulfatase activity in vitro. This is Adenylylsulfatase HINT3 from Arabidopsis thaliana (Mouse-ear cress).